A 386-amino-acid polypeptide reads, in one-letter code: Probable pectin lyase F (386 aa).

An N-terminal signal peptide occupies residues 1–16; that stretch reads MKTAVLSLLLALQAYA. An intrachain disulfide couples C77 to C101. The N-linked (GlcNAc...) asparagine glycan is linked to N124. The active site involves R251. A disulfide bond links C326 and C334.

Belongs to the polysaccharide lyase 1 family.

Its subcellular location is the secreted. The catalysed reaction is Eliminative cleavage of (1-&gt;4)-alpha-D-galacturonan methyl ester to give oligosaccharides with 4-deoxy-6-O-methyl-alpha-D-galact-4-enuronosyl groups at their non-reducing ends.. Functionally, pectinolytic enzymes consist of four classes of enzymes: pectin lyase, polygalacturonase, pectin methylesterase and rhamnogalacturonase. Among pectinolytic enzymes, pectin lyase is the most important in depolymerization of pectin, since it cleaves internal glycosidic bonds of highly methylated pectins. This is Probable pectin lyase F (pelF) from Neosartorya fischeri (strain ATCC 1020 / DSM 3700 / CBS 544.65 / FGSC A1164 / JCM 1740 / NRRL 181 / WB 181) (Aspergillus fischerianus).